A 475-amino-acid polypeptide reads, in one-letter code: Tesmin (475 aa).

2 positions are modified to phosphoserine: serine 34 and serine 67. The region spanning 263-372 (SGPALQGPPK…KCIACKNYEE (110 aa)) is the CRC domain.

This sequence belongs to the lin-54 family.

The protein localises to the cytoplasm. Its subcellular location is the nucleus. In terms of biological role, may have a role in spermatogenesis. In Rattus norvegicus (Rat), this protein is Tesmin.